We begin with the raw amino-acid sequence, 277 residues long: UPF0276 protein PP_0992 (277 aa).

This sequence belongs to the UPF0276 family.

The chain is UPF0276 protein PP_0992 from Pseudomonas putida (strain ATCC 47054 / DSM 6125 / CFBP 8728 / NCIMB 11950 / KT2440).